The chain runs to 212 residues: Cyclin-dependent kinase inhibitor 3 (212 aa).

Residues 1–24 (MKPPISIQASEFDSSDEEPADDEQ) are disordered. The interval 1–34 (MKPPISIQASEFDSSDEEPADDEQTPIQISWLPL) is interaction with CDK2. A compositionally biased stretch (acidic residues) spans 13-24 (DSSDEEPADDEQ). The 170-residue stretch at 32 to 201 (LPLSRVNCSQ…FRDKLAAYLS (170 aa)) folds into the Tyrosine-protein phosphatase domain. The Phosphocysteine intermediate role is filled by C140.

Belongs to the protein-tyrosine phosphatase family. In terms of assembly, interacts with cyclin-dependent kinases such as CDK1, CDK2 and CDK3. Does not interact with CDK4. Interacts (via C-terminus) with phosphorylated CDK2 (via C-terminal helix). Interacts with MS4A3 (via C-terminus); the interaction enhances CDKN3 enzymatic activity.

The protein resides in the cytoplasm. The protein localises to the perinuclear region. It carries out the reaction O-phospho-L-tyrosyl-[protein] + H2O = L-tyrosyl-[protein] + phosphate. The catalysed reaction is O-phospho-L-seryl-[protein] + H2O = L-seryl-[protein] + phosphate. It catalyses the reaction O-phospho-L-threonyl-[protein] + H2O = L-threonyl-[protein] + phosphate. Functionally, may play a role in cell cycle regulation. Dual specificity phosphatase active toward substrates containing either phosphotyrosine or phosphoserine residues. Dephosphorylates CDK2 at 'Thr-160' in a cyclin-dependent manner. This chain is Cyclin-dependent kinase inhibitor 3, found in Rattus norvegicus (Rat).